The following is a 1773-amino-acid chain: Disco-interacting protein 2 (1773 aa).

The DMAP1-binding domain maps to 3–110 (HTASLPGYVR…QRHSKKIDFH (108 aa)). Phosphotyrosine is present on residues Tyr60 and Tyr61. Disordered stretches follow at residues 112-185 (QAAM…YHSE) and 198-319 (LKGR…PLSS). Composition is skewed to polar residues over residues 113-125 (AAMS…QSGN) and 146-165 (YQNT…NNSQ). Residues 166 to 175 (HRQRRTQRKV) are compositionally biased toward basic residues. Positions 176 to 185 (THNEKRYHSE) are enriched in basic and acidic residues. Residues 224-236 (DELDSSTDDESIP) show a composition bias toward acidic residues. Over residues 241-253 (SPDKEYNYPRDHI) the composition is skewed to basic and acidic residues. Polar residues predominate over residues 272–297 (SMGSQQHARTDVKQNQITNQKYTAPN).

Belongs to the DIP2 family. As to quaternary structure, interacts with Disco. In terms of tissue distribution, expressed in the developing nervous system. Ubiquitously expressed in the developing brain. Within the mushroom body, a higher level is detected in the core of lobes and peduncle in the late third instar larva. Detected in whole mushroom body neuron structures at 48 hours after puparium formation and during later stages.

It localises to the cell membrane. Functionally, required for precise axonal bifurcation in mushroom body neurons by suppressing ectopic bifurcation and regulating the guidance of sister axons. May function by regulating expression of tdp1. Acts downstream of the serine/threonine-protein kinase Bsk to modulate the direction of axon projection. May play a role in fatty acid metabolism. The protein is Disco-interacting protein 2 of Drosophila melanogaster (Fruit fly).